The sequence spans 274 residues: uncharacterized protein (274 aa).

Low complexity predominate over residues 1 to 17; sequence MTQLTNFSESFSNQNSN. Disordered stretches follow at residues 1-38 and 222-274; these read MTQL…YYVR and ELGT…MEFE. A compositionally biased stretch (polar residues) spans 18–28; it reads LHQPYNFNSHQ. Residues 29 to 38 show a composition bias toward basic and acidic residues; it reads PPEENHYYVR. Polar residues-rich tracts occupy residues 239–249 and 256–265; these read PMASPTGSSQI and SPNSLTNGSV.

This is an uncharacterized protein from Caenorhabditis elegans.